The primary structure comprises 166 residues: Large ribosomal subunit protein bL9 (166 aa).

The protein belongs to the bacterial ribosomal protein bL9 family.

Functionally, binds to the 23S rRNA. The protein is Large ribosomal subunit protein bL9 of Psychrobacter arcticus (strain DSM 17307 / VKM B-2377 / 273-4).